The following is a 167-amino-acid chain: Transcription factor E (167 aa).

Residues 8 to 90 (NDKVIRGYLI…LWHLDFSDVE (83 aa)) form the HTH TFE/IIEalpha-type domain.

It belongs to the TFE family. Monomer. Interaction with RNA polymerase subunits RpoF and RpoE is necessary for Tfe stimulatory transcription activity. Able to interact with Tbp and RNA polymerase in the absence of DNA promoter. Interacts both with the preinitiation and elongation complexes.

Its function is as follows. Transcription factor that plays a role in the activation of archaeal genes transcribed by RNA polymerase. Facilitates transcription initiation by enhancing TATA-box recognition by TATA-box-binding protein (Tbp), and transcription factor B (Tfb) and RNA polymerase recruitment. Not absolutely required for transcription in vitro, but particularly important in cases where Tbp or Tfb function is not optimal. It dynamically alters the nucleic acid-binding properties of RNA polymerases by stabilizing the initiation complex and destabilizing elongation complexes. Seems to translocate with the RNA polymerase following initiation and acts by binding to the non template strand of the transcription bubble in elongation complexes. This is Transcription factor E from Methanosarcina acetivorans (strain ATCC 35395 / DSM 2834 / JCM 12185 / C2A).